Here is a 599-residue protein sequence, read N- to C-terminus: Elongation factor 4 (599 aa).

The region spanning 5 to 187 (SKIRNFSIVA…AIVKRLPAPT (183 aa)) is the tr-type G domain. GTP-binding positions include 17-22 (DHGKST) and 134-137 (NKID).

It belongs to the TRAFAC class translation factor GTPase superfamily. Classic translation factor GTPase family. LepA subfamily.

The protein resides in the cell inner membrane. The catalysed reaction is GTP + H2O = GDP + phosphate + H(+). Functionally, required for accurate and efficient protein synthesis under certain stress conditions. May act as a fidelity factor of the translation reaction, by catalyzing a one-codon backward translocation of tRNAs on improperly translocated ribosomes. Back-translocation proceeds from a post-translocation (POST) complex to a pre-translocation (PRE) complex, thus giving elongation factor G a second chance to translocate the tRNAs correctly. Binds to ribosomes in a GTP-dependent manner. This is Elongation factor 4 from Ruegeria sp. (strain TM1040) (Silicibacter sp.).